Consider the following 783-residue polypeptide: MITTRLARMGALAPKSRLLFGTRGMATVADLDKKVEMCNLEKGNYINYKKMSENLDVVRRRLTRPLTYAEKILYSHLDDPQNQDIERGKSYLKLRPDRVACQDATAQMAILQFMSAGMPSVATPTTVHCDHLIEAQLGGEKDLARANEINKEVYDFLASSTAKYNIGFWKPGSGIIHQIILENYAFPGGLMIGTDSHTPNAGGLAIAAIGVGGADAVDVMAGLPWELKAPKVIGVRLTGEMSGWTAPKDIILKVAGLLTVKGGTGAIIEYHGPGVNSLSATGMATICNMGAEIGATTSLFPFNDRMYDYLKATKRQQIGDFARSYAKDLREDEGAEYDQLIEINLSELEPHINGPFTPDLATPISQFKEAVKANGWPEELKVGLIGSCTNSSYEDMSRAASIAQDALDHGLKAKSIFTVTPGSEQIRATIERDGQLKTLEEFGGVILANACGPCIGQWDRKDVKKGTPNSIVSSYNRNFTGRNDANPATHAFVTSPDLVVALSIAGTLNFNPLTDTLKDKDGKEFKLKAPTGDGLPSRGYDPGRDTYQAPPTDRSSVDVAVSPSSDRLQLLAGFQPWDGKDATGIPILIKCQGKTTTDHISMAGPWLKYRGHLDNISNNMLIGAVNAENGEANKIKNVFTGEYGAVPATARDYKARGVKWVVIGDWNYGEGSSREHAALEPRHLGGLAIITRSFARIHETNLKKQGMLPLTFSDPADYDRIPPDATVDLLCTELAVDKPMTLRVHPKDGASFDVKLSHTFNESQIEWFKDGSALNTMARKSGN.

The N-terminal 25 residues, 1-25 (MITTRLARMGALAPKSRLLFGTRGM), are a transit peptide targeting the mitochondrion. Substrate-binding positions include Gln-102 and 195 to 197 (DSH). [4Fe-4S] cluster contacts are provided by Cys-388, Cys-451, and Cys-454. Arg-477 and Arg-482 together coordinate substrate. The interval 524 to 555 (EFKLKAPTGDGLPSRGYDPGRDTYQAPPTDRS) is disordered. Substrate-binding positions include Arg-610 and 673–674 (SR).

Belongs to the aconitase/IPM isomerase family. Requires [4Fe-4S] cluster as cofactor.

It is found in the mitochondrion. The catalysed reaction is citrate = D-threo-isocitrate. The enzyme catalyses (2R)-homocitrate = cis-homoaconitate + H2O. It functions in the pathway carbohydrate metabolism; tricarboxylic acid cycle; isocitrate from oxaloacetate: step 2/2. Its pathway is amino-acid biosynthesis; L-lysine biosynthesis via AAA pathway; L-alpha-aminoadipate from 2-oxoglutarate: step 2/5. Its function is as follows. Catalyzes the isomerization of citrate to isocitrate via cis-aconitate, a step in the citric acid cycle. Also catalyzes the reversible dehydration of (R)-homocitrate to cis-homoaconitate, a step in the alpha-aminoadipate pathway for lysine biosynthesis. This chain is Aconitate hydratase, mitochondrial (acoA), found in Emericella nidulans (strain FGSC A4 / ATCC 38163 / CBS 112.46 / NRRL 194 / M139) (Aspergillus nidulans).